The chain runs to 827 residues: Discs large homolog 1-like protein (827 aa).

Disordered stretches follow at residues 38–61 (HQDEDTGSPQEPSSPQFTDDTPGP) and 102–133 (SPVVKEESPPSPSTPLSNPYPQSPVSVQANPP). The span at 44–56 (GSPQEPSSPQFTD) shows a compositional bias: polar residues. 3 consecutive PDZ domains span residues 159–246 (EITL…RRRK), 254–341 (EIKL…AKPN), and 403–484 (KVVL…QYRP). The region spanning 518 to 588 (KRSLYVRALF…PSKRRVEKKE (71 aa)) is the SH3 domain. Positions 595–618 (VKFNSKSREKGDNPDDMLSKGQSG) are disordered. Positions 637-812 (SRPVIILGPM…IYDQVKQIIE (176 aa)) constitute a Guanylate kinase-like domain.

The protein belongs to the MAGUK family.

It localises to the membrane. Its function is as follows. May play a role in synapse assembly and function. In Danio rerio (Zebrafish), this protein is Discs large homolog 1-like protein (dlg1l).